The primary structure comprises 116 residues: Flagellar transcriptional regulator FlhD (116 aa).

Belongs to the FlhD family. In terms of assembly, homodimer; disulfide-linked. Forms a heterohexamer composed of two FlhC and four FlhD subunits. Each FlhC binds a FlhD dimer, forming a heterotrimer, and a hexamer assembles by dimerization of two heterotrimers.

Its subcellular location is the cytoplasm. In terms of biological role, functions in complex with FlhC as a master transcriptional regulator that regulates transcription of several flagellar and non-flagellar operons by binding to their promoter region. Activates expression of class 2 flagellar genes, including fliA, which is a flagellum-specific sigma factor that turns on the class 3 genes. Also regulates genes whose products function in a variety of physiological pathways. In Pectobacterium carotovorum subsp. carotovorum (strain PC1), this protein is Flagellar transcriptional regulator FlhD.